Here is a 64-residue protein sequence, read N- to C-terminus: Large ribosomal subunit protein bL35 (64 aa).

The protein belongs to the bacterial ribosomal protein bL35 family.

This chain is Large ribosomal subunit protein bL35, found in Coxiella burnetii (strain RSA 493 / Nine Mile phase I).